A 184-amino-acid chain; its full sequence is uncharacterized protein (184 aa).

The first 20 residues, 1–20 (MKKQILALVCGVIFSSSTWA), serve as a signal peptide directing secretion.

This sequence to E.coli YtfJ.

It is found in the periplasm. This is an uncharacterized protein from Haemophilus influenzae (strain ATCC 51907 / DSM 11121 / KW20 / Rd).